Here is a 409-residue protein sequence, read N- to C-terminus: UPF0261 protein Spro_4740 (409 aa).

Belongs to the UPF0261 family.

In Serratia proteamaculans (strain 568), this protein is UPF0261 protein Spro_4740.